A 315-amino-acid chain; its full sequence is Voltage-dependent calcium channel gamma-3 subunit (315 aa).

Transmembrane regions (helical) follow at residues 8–28, 104–124, 135–155, and 181–201; these read IQML…TIAV, SSVF…CVAA, ILSA…GIIV, and FGAF…HIYI. Positions 232–253 are disordered; the sequence is RRRSSSRSTEPRSRDLSPISKG. Ser-248 bears the Phosphoserine mark.

It belongs to the PMP-22/EMP/MP20 family. CACNG subfamily. As to quaternary structure, the L-type calcium channel is composed of five subunits: alpha-1, alpha-2/delta, beta and gamma. Acts as an auxiliary subunit for AMPA-selective glutamate receptors (AMPARs). Found in a complex with GRIA1, GRIA2, GRIA3, GRIA4, CNIH2, CNIH3, CACNG2, CACNG4, CACNG5, CACNG7 and CACNG8. Interacts with AP4M1 and GRIA1; associates GRIA1 with the adaptor protein complex 4 (AP-4) to target GRIA1 to the somatodendritic compartment of neurons.

Its subcellular location is the membrane. Regulates the trafficking to the somatodendritic compartment and gating properties of AMPA-selective glutamate receptors (AMPARs). Promotes their targeting to the cell membrane and synapses and modulates their gating properties by slowing their rates of activation, deactivation and desensitization. Does not show subunit-specific AMPA receptor regulation and regulates all AMPAR subunits. Thought to stabilize the calcium channel in an inactivated (closed) state. In Mus musculus (Mouse), this protein is Voltage-dependent calcium channel gamma-3 subunit (Cacng3).